We begin with the raw amino-acid sequence, 422 residues long: Probable protease eep (422 aa).

Residue His18 participates in Zn(2+) binding. Glu19 is a catalytic residue. His22 lines the Zn(2+) pocket. 3 helical membrane-spanning segments follow: residues 176–196 (FAGPMNNFILGFILFTLAVFL), 349–369 (VVFLMAMLSMNLGIINLLPIP), and 394–414 (EGIITLIGFGFVMVLMVLVTW). Residues 179 to 273 (PMNNFILGFI…EEQLTVTPEK (95 aa)) enclose the PDZ domain.

The protein belongs to the peptidase M50B family. The cofactor is Zn(2+).

The protein localises to the cell membrane. Functionally, involved in production of the peptide pheromone cAD1. The protein is Probable protease eep (eep) of Enterococcus faecalis (strain ATCC 700802 / V583).